We begin with the raw amino-acid sequence, 791 residues long: DUF1769 family protein duc1 (791 aa).

The interval 158–189 (ADSQESDTESLPEINDSSDVSLSDLPSTNVTP) is disordered. A compositionally biased stretch (low complexity) spans 174–184 (SSDVSLSDLPS). The short motif at 373–379 (RYFTALE) is the FFAT element. Tyr-374 carries the post-translational modification Phosphotyrosine. Residue Thr-376 is modified to Phosphothreonine. Disordered stretches follow at residues 381–505 (QQDQ…SNRR), 542–606 (NVAG…VDGK), and 630–658 (PKPV…NLDP). The span at 415–426 (LIKRMSLRSKKS) shows a compositional bias: basic residues. Low complexity predominate over residues 444-453 (STASAASTSA). Residues 455 to 473 (KTEKEKKMSAPRRSLDKLI) show a composition bias toward basic and acidic residues. Phosphoserine is present on residues Ser-477 and Ser-493. A compositionally biased stretch (basic residues) spans 477-487 (SLHRHHHHHHK). The span at 555–564 (EQTSITSGVP) shows a compositional bias: polar residues. Ser-574 is modified (phosphoserine). A compositionally biased stretch (basic and acidic residues) spans 574-586 (STPEKIVEERSID). A compositionally biased stretch (polar residues) spans 587 to 601 (EVSQSNTPSSKQLPQ).

It belongs to the UPF0590 family. Interacts (via FFAT-motif) with scs2 (via MSP domain); the interaction is direct and serves to restrict the localization of duc1 to areas of cell membrane-endoplasmic reticulum contact sites, and away from the cell division site.

It is found in the cell membrane. Its function is as follows. Promotes the proper distribution of phosphatidylinositol 4,5-bisphosphate (PtdIns(4,5)P2/PIP2) synthesis at the cell membrane. May bind phosphatidylinositol 4,5-bisphosphate (PtdIns(4,5)P2/PIP2) and is required for robust anchoring of the contractile ring to the cell membrane. The polypeptide is DUF1769 family protein duc1 (Schizosaccharomyces pombe (strain 972 / ATCC 24843) (Fission yeast)).